The chain runs to 897 residues: 3'-5' exonuclease DinG (897 aa).

The Exonuclease domain occupies V8–L161. The Helicase ATP-binding domain maps to S241–R496. A276–S283 provides a ligand contact to ATP. Residues D448 to H451 carry the DEAH box motif. In terms of domain architecture, Helicase C-terminal spans N703–Q883.

This sequence belongs to the helicase family. DinG subfamily. Type 2 sub-subfamily.

Functionally, 3'-5' exonuclease. The sequence is that of 3'-5' exonuclease DinG from Staphylococcus aureus (strain bovine RF122 / ET3-1).